A 310-amino-acid polypeptide reads, in one-letter code: MLDANKLQQAVDQAYTQFHSLNGGQNADYIPFLANVPGQLAVVAIVTCDGNVYSAGDSDYRFALESISKVCTLALALEDVGPQAVQDKIGADPTGLPFNSVIALELHGGKPLSPLVNAGAIATTSLINAENIEQRWQRILHIQQQLAGEQVALSDEVNQSEQTTNFHNRAIAWLLYSAGYLYCDAMEACDVYTRQCSTLINTVELATLGATLAAGGLNPLTHKRVLQADNVPYILAEMMMEGLYGRSGDWAYRVGLPGKSGVGGGILAVVPGVMGIAAFSPPLDEEGNSVRGQKMVASVAKQLGYNVFKG.

Substrate contacts are provided by serine 66, asparagine 117, glutamate 161, asparagine 168, tyrosine 192, tyrosine 244, and valine 262.

It belongs to the glutaminase family. As to quaternary structure, homotetramer.

It catalyses the reaction L-glutamine + H2O = L-glutamate + NH4(+). This chain is Glutaminase, found in Shigella boydii serotype 4 (strain Sb227).